Consider the following 702-residue polypeptide: Amino-acid racemase (702 aa).

The Cytoplasmic portion of the chain corresponds to 1–12 (MKHRANGIDLFR). The helical transmembrane segment at 13-33 (IFAATMVVAIHTFPFQSIAPF) threads the bilayer. Topologically, residues 34-39 (LDEVIT) are extracellular. Residues 40–60 (LTVFRVAVPFFFMITGYFLLG) traverse the membrane as a helical segment. Over 61-77 (RLSLNFSYNNNQRVKKY) the chain is Cytoplasmic. The chain crosses the membrane as a helical span at residues 78 to 98 (LYKIGMIYLYSILLYFPLSLL). At 99-120 (NGTISLKMNILLLLKVFIFDGT) the chain is on the extracellular side. A helical membrane pass occupies residues 121–141 (FYHLWYFPASIIGTILVTLLL). Residue Arg142 is a topological domain, cytoplasmic. The chain crosses the membrane as a helical span at residues 143–163 (SIGFKLTVAFSTCLYLVGLGG). The Extracellular portion of the chain corresponds to 164 to 191 (DSWYGITNQVPLLNKLYTFIFSWSDYTR). A helical transmembrane segment spans residues 192–212 (SGVFFTPVFLCLGIFAYRVSK). Topologically, residues 213-218 (KLTASK) are cytoplasmic. A helical transmembrane segment spans residues 219 to 239 (ILNLLFYVFIIGMTFESIFLH). The Extracellular segment spans residues 240–248 (RFTNVKHDS). Residues 249–269 (MYLLLPSCALILFLMLLNWQP) form a helical membrane-spanning segment. The Cytoplasmic portion of the chain corresponds to 270–276 (KLKVKES). A helical membrane pass occupies residues 277 to 297 (ADLTLLVYILHPLVIVIVHSI). Residues 298-307 (SKYIPILKNS) are Extracellular-facing. Residues 308 to 328 (LLNFLLVVVCSFILAQLLLNL) traverse the membrane as a helical segment. Residues 329–702 (KRKLRVSKQK…LGSRLGTELN (374 aa)) are Cytoplasmic-facing. The segment at 337–702 (QKIPFERASK…LGSRLGTELN (366 aa)) is racemase. Lys375 functions as the Proton acceptor in the catalytic mechanism. Lys375 is subject to N6-(pyridoxal phosphate)lysine. A substrate-binding site is contributed by Arg469. Tyr601 acts as the Proton acceptor in catalysis. Met650 provides a ligand contact to substrate.

This sequence in the N-terminal section; belongs to the acyltransferase 3 family. It in the C-terminal section; belongs to the alanine racemase family. It depends on pyridoxal 5'-phosphate as a cofactor.

It is found in the cell membrane. This is Amino-acid racemase (vanTE) from Enterococcus faecalis (Streptococcus faecalis).